The following is a 326-amino-acid chain: Photosystem II assembly factor Ycf39 (326 aa).

The protein belongs to the NmrA-type oxidoreductase family. Ycf39 subfamily. As to quaternary structure, purified in several chlorophyll- and carotenoid-containing complexes, including photosystem II (PSII) assembly intermediate complex RCII* (iD1, D1, D2, PsbE, PsbF, PsbI, Ycf39, Ycf48, HliC and HliD) and the Ycf39-Hlip complex (Ycf39, HliC, HliD and pigments). Tagged protein does not pull down mature PSII.

It localises to the cellular thylakoid membrane. In terms of biological role, requires HliD to bind pigments. The Ycf39-Hlip complex binds D1 at an early stage of PSII assembly along with Ycf48, ribosomes and ChlG, the last enzyme in chlorophyll biosynthesis; it may be involved in chlorophyll reuse and delivery to D1 in the initial stages of PSII assembly. The Ycf39-Hlip complex efficiently quenches chlorophyll fluorescence, contributing to photoprotection. The polypeptide is Photosystem II assembly factor Ycf39 (Synechocystis sp. (strain ATCC 27184 / PCC 6803 / Kazusa)).